Consider the following 418-residue polypeptide: UDP-N-acetylglucosamine 1-carboxyvinyltransferase (418 aa).

22-23 (KN) serves as a coordination point for phosphoenolpyruvate. R91 serves as a coordination point for UDP-N-acetyl-alpha-D-glucosamine. The Proton donor role is filled by C115. C115 is subject to 2-(S-cysteinyl)pyruvic acid O-phosphothioketal. UDP-N-acetyl-alpha-D-glucosamine contacts are provided by D305 and I327.

The protein belongs to the EPSP synthase family. MurA subfamily.

It localises to the cytoplasm. It carries out the reaction phosphoenolpyruvate + UDP-N-acetyl-alpha-D-glucosamine = UDP-N-acetyl-3-O-(1-carboxyvinyl)-alpha-D-glucosamine + phosphate. It functions in the pathway cell wall biogenesis; peptidoglycan biosynthesis. Cell wall formation. Adds enolpyruvyl to UDP-N-acetylglucosamine. In Aeromonas salmonicida (strain A449), this protein is UDP-N-acetylglucosamine 1-carboxyvinyltransferase.